The following is a 620-amino-acid chain: Glutathione-regulated potassium-efflux system protein KefC (620 aa).

Over 1–3 (MDS) the chain is Periplasmic. A helical membrane pass occupies residues 4–24 (HTLLQALIYLGSAALIVPIAV). Residue R25 is a topological domain, cytoplasmic. The chain crosses the membrane as a helical span at residues 26–46 (LGLGSVLGYLIAGCIIGPWGL). Over 47-53 (RLVTDAE) the chain is Periplasmic. Residues 54 to 74 (SILHFAEIGVVLMLFVIGLEL) form a helical membrane-spanning segment. The Cytoplasmic portion of the chain corresponds to 75 to 89 (DPQRLWKLRASVFGG). A helical transmembrane segment spans residues 90–110 (GALQMGVCGGLIGLFCMFLGL). Topologically, residues 111–113 (RWQ) are periplasmic. A helical transmembrane segment spans residues 114 to 134 (VAELIGMTLALSSTAIAMQAM). Residues 135–148 (NERNLTVSQVGRSA) lie on the Cytoplasmic side of the membrane. Residues 149–169 (FAVLLFQDIAAIPLVAMIPLL) traverse the membrane as a helical segment. Residues 170–177 (AASGASTT) lie on the Periplasmic side of the membrane. Residues 178-198 (LGAFALSALKVAGALALVVLL) form a helical membrane-spanning segment. The Cytoplasmic portion of the chain corresponds to 199-213 (GRYVTRPALRFVARS). A helical membrane pass occupies residues 214-233 (GLREVFSAVALFLVFGFGLL). Topologically, residues 234–236 (LEE) are periplasmic. A helical transmembrane segment spans residues 237 to 254 (VGLSMAMGAFLAGVLLAS). Residues 255–269 (SEYRHALESDIEPFK) lie on the Cytoplasmic side of the membrane. Residues 270–290 (GLLLGLFFIGVGMSIDFGTLV) traverse the membrane as a helical segment. Residues 291–293 (ENP) lie on the Periplasmic side of the membrane. A helical membrane pass occupies residues 294–314 (LRILLLLAGFLAIKIVMLWLV). The Cytoplasmic segment spans residues 315–326 (ARPLGVPAKQRR). A helical membrane pass occupies residues 327 to 347 (WFAVLLGQGSEFAFVVFGAAQ). The Periplasmic segment spans residues 348–358 (MADVLEPEWAK). Residues 359-379 (ALTLAVALSMAATPIFLVLLT) traverse the membrane as a helical segment. Over 380-620 (RMEKTATGEA…ADEPEVKPSI (241 aa)) the chain is Cytoplasmic. In terms of domain architecture, RCK N-terminal spans 399–518 (QPRVIVAGFG…AGVAMPERET (120 aa)). The segment at 599 to 620 (QGTAEGKHSGEVADEPEVKPSI) is disordered.

The protein belongs to the monovalent cation:proton antiporter 2 (CPA2) transporter (TC 2.A.37) family. KefC subfamily. Homodimer. Interacts with the regulatory subunit KefF.

The protein localises to the cell inner membrane. In terms of biological role, pore-forming subunit of a potassium efflux system that confers protection against electrophiles. Catalyzes K(+)/H(+) antiport. The polypeptide is Glutathione-regulated potassium-efflux system protein KefC (Salmonella typhimurium (strain LT2 / SGSC1412 / ATCC 700720)).